Here is a 141-residue protein sequence, read N- to C-terminus: Arsenate reductase (141 aa).

The active-site Nucleophile; cysteine thioarsenate intermediate is the cysteine 12.

The protein belongs to the ArsC family.

It carries out the reaction [glutaredoxin]-dithiol + arsenate + glutathione + H(+) = glutathionyl-S-S-[glutaredoxin] + arsenite + H2O. Functionally, involved in resistance to arsenate. Catalyzes the reduction of arsenate [As(V)] to arsenite [As(III)]. This Escherichia coli (strain K12) protein is Arsenate reductase.